A 339-amino-acid polypeptide reads, in one-letter code: Phosphate acyltransferase (339 aa).

It belongs to the PlsX family. In terms of assembly, homodimer. Probably interacts with PlsY.

It is found in the cytoplasm. It catalyses the reaction a fatty acyl-[ACP] + phosphate = an acyl phosphate + holo-[ACP]. Its pathway is lipid metabolism; phospholipid metabolism. Its function is as follows. Catalyzes the reversible formation of acyl-phosphate (acyl-PO(4)) from acyl-[acyl-carrier-protein] (acyl-ACP). This enzyme utilizes acyl-ACP as fatty acyl donor, but not acyl-CoA. In Helicobacter acinonychis (strain Sheeba), this protein is Phosphate acyltransferase.